A 504-amino-acid chain; its full sequence is ADP,ATP carrier protein 3 (504 aa).

The next 12 helical transmembrane spans lie at leucine 23–leucine 43, isoleucine 59–tyrosine 79, tyrosine 90–isoleucine 110, tyrosine 146–tryptophan 166, proline 183–phenylalanine 203, glutamate 230–phenylalanine 250, isoleucine 296–alanine 316, valine 329–isoleucine 349, leucine 364–isoleucine 384, glutamate 386–isoleucine 406, phenylalanine 449–threonine 469, and isoleucine 473–valine 493.

This sequence belongs to the ADP/ATP translocase tlc family.

The protein localises to the cell membrane. Provides the rickettsial cell with host ATP in exchange for rickettsial ADP. This is an obligate exchange system. This energy acquiring activity is an important component of rickettsial parasitism. The sequence is that of ADP,ATP carrier protein 3 (tlcC) from Rickettsia bellii (strain RML369-C).